The following is a 373-amino-acid chain: 3 beta-hydroxysteroid dehydrogenase/Delta 5--&gt;4-isomerase type 1 (373 aa).

NADP(+) is bound by residues 10-15 (GAGGFL), Tyr-155, and Lys-159. Residue Lys-159 is the Proton donor of the active site. The helical transmembrane segment at 288 to 308 (LALMYWIGFLLEVVSFLLSPV) threads the bilayer.

It belongs to the 3-beta-HSD family. Adrenal glands, testes and ovaries.

The protein resides in the endoplasmic reticulum membrane. It is found in the mitochondrion membrane. It catalyses the reaction a 3beta-hydroxy-Delta(5)-steroid + NAD(+) = a 3-oxo-Delta(5)-steroid + NADH + H(+). The enzyme catalyses pregnenolone + NAD(+) = pregn-5-ene-3,20-dione + NADH + H(+). It carries out the reaction 3beta-hydroxyandrost-5-en-17-one + NAD(+) = androst-5-ene-3,17-dione + NADH + H(+). The catalysed reaction is androst-5-en-3beta,17beta-diol + NAD(+) = 17beta-hydroxy-androst-5-en-3-one + NADH + H(+). It catalyses the reaction a 3beta-hydroxysteroid + NADP(+) = a 3-oxosteroid + NADPH + H(+). The enzyme catalyses 5alpha-androstane-3beta,17beta-diol + NADP(+) = 17beta-hydroxy-5alpha-androstan-3-one + NADPH + H(+). It carries out the reaction 3beta-hydroxy-5alpha-androstan-17-one + NADP(+) = 5alpha-androstan-3,17-dione + NADPH + H(+). The catalysed reaction is a 3-oxo-Delta(5)-steroid = a 3-oxo-Delta(4)-steroid. It catalyses the reaction pregn-5-ene-3,20-dione = progesterone. The enzyme catalyses androst-5-ene-3,17-dione = androst-4-ene-3,17-dione. It carries out the reaction 17beta-hydroxy-androst-5-en-3-one = testosterone. The catalysed reaction is 5alpha-androstane-3beta,17beta-diol + NAD(+) = 17beta-hydroxy-5alpha-androstan-3-one + NADH + H(+). The protein operates within steroid hormone biosynthesis. Its pathway is steroid metabolism. In terms of biological role, a bifunctional enzyme responsible for the oxidation and isomerization of 3beta-hydroxy-Delta(5)-steroid precursors to 3-oxo-Delta(4)-steroids, an essential step in steroid hormone biosynthesis. Specifically catalyzes the conversion of pregnenolone to progesterone, 17alpha-hydroxypregnenolone to 17alpha-hydroxyprogesterone, dehydroepiandrosterone (DHEA) to 4-androstenedione and androstenediol to testosterone. Additionally, catalyzes the interconversion between 3beta-hydroxy and 3-oxo-5alpha-androstane steroids controlling the bioavalability of the active forms. Specifically converts dihydrotestosterone to its inactive form 5alpha-androstanediol, that does not bind androgen receptor/AR. Also converts androstanedione, a precursor of testosterone and estrone, to epiandrosterone. Expected to use NAD(+) as preferred electron donor for the 3beta-hydroxy-steroid dehydrogenase activity and NADPH for the 3-ketosteroid reductase activity. In Macaca mulatta (Rhesus macaque), this protein is 3 beta-hydroxysteroid dehydrogenase/Delta 5--&gt;4-isomerase type 1 (HSD3B1).